A 1687-amino-acid polypeptide reads, in one-letter code: Muscle calcium channel subunit alpha-1 (1687 aa).

The segment at 1 to 33 is disordered; that stretch reads MDDAVCPTETDNVQNKQKATTPKRTQRRGGKQQ. Residues 1–61 are Cytoplasmic-facing; that stretch reads MDDAVCPTET…IFCIKIVDSK (61 aa). Over residues 9–23 the composition is skewed to polar residues; the sequence is ETDNVQNKQKATTPK. Residues 48-330 form an I repeat; sequence NPLRIFCIKI…LILGVLSGEF (283 aa). A helical transmembrane segment spans residues 62–80; sequence LFEYFILLTIFANCVALAV. Residues 81 to 99 lie on the Extracellular side of the membrane; the sequence is YTPYPSGDSNITNQMLEKI. N-linked (GlcNAc...) asparagine glycosylation is present at Asn-90. Residues 100-117 traverse the membrane as a helical segment; that stretch reads EYIFLVIFTSECVMKIIA. Residues 118–130 lie on the Cytoplasmic side of the membrane; that stretch reads YGFVLHTGSYLRN. A helical transmembrane segment spans residues 131 to 145; it reads GWNFLDFFIVVIGMI. Residues 146-157 lie on the Extracellular side of the membrane; it reads STALSNLVKEGF. The helical transmembrane segment at 158-176 threads the bilayer; it reads DVKALRAFRVLRPLRLVSG. Residues 177-196 are Cytoplasmic-facing; it reads VPSLQVVLNSILKAMIPLLH. The chain crosses the membrane as a helical span at residues 197 to 216; sequence IALLVLFVIIIYAIIGLELF. Residues 217–302 lie on the Extracellular side of the membrane; it reads SGKLHKTCRH…SIQDAMGSSW (86 aa). Residue Glu-285 coordinates Ca(2+). A helical membrane pass occupies residues 303–327; that stretch reads EWIYFVSMVILGAFFVMNLILGVLS. The Cytoplasmic portion of the chain corresponds to 328 to 434; sequence GEFSKERTKA…RACRKAVKSQ (107 aa). An II repeat occupies 420 to 667; the sequence is NRRIRRACRK…VFLAIAVDNL (248 aa). A helical membrane pass occupies residues 435 to 454; it reads AFYWLIILLVFLNTGVLATE. The Extracellular segment spans residues 455–467; it reads HYRQPIWLDQFQE. Residues 468–487 form a helical membrane-spanning segment; the sequence is YTNIFFIALFTCEMILKMYS. Residues 488-496 are Cytoplasmic-facing; sequence LGFQGYFVS. The chain crosses the membrane as a helical span at residues 497–515; that stretch reads LFNRFDCFVVIGSISEMVL. Topologically, residues 516 to 525 are extracellular; sequence TSSELMAPLG. A helical transmembrane segment spans residues 526–544; sequence VSVLRCVRLLRVFKVTKYW. At 545–563 the chain is on the cytoplasmic side; that stretch reads HSLSNLVASLLNSIQSIAS. Residues 564–583 traverse the membrane as a helical segment; that stretch reads LLLLLFLFIVIFGLLGMQVF. Residues 584–639 lie on the Extracellular side of the membrane; sequence GGRFTFKPEEEKPRSNFDSFYQSLLTVFQILTGEDWNVVMYDGIRAYGGVFSFGIV. Residue Glu-617 coordinates Ca(2+). Residues 640 to 664 traverse the membrane as a helical segment; the sequence is ACIYYIILFICGNYILLNVFLAIAV. Over 665 to 785 the chain is Cytoplasmic; the sequence is DNLADADSLS…TNRFRIFCHR (121 aa). The stretch at 777–1059 is one III repeat; sequence NRFRIFCHRL…IFVGFVIVTF (283 aa). Residues 786–809 traverse the membrane as a helical segment; that stretch reads LCNHSNFGNFILCCIMFSSAMLAA. The Extracellular portion of the chain corresponds to 810–826; the sequence is ENPLKADASRNIVLNKF. Residues 827–846 traverse the membrane as a helical segment; the sequence is DYFFTAVFTIELVLKLISYG. Residues 847-854 are Cytoplasmic-facing; the sequence is FVLHDGAF. Residues 855–877 traverse the membrane as a helical segment; the sequence is CRSAFNLLDLLVVCVSLISIFFN. Residues 878 to 885 lie on the Extracellular side of the membrane; sequence SNAISVVK. The chain crosses the membrane as a helical span at residues 886–900; the sequence is ILRVLRVLRPLRAIN. Residues 901–921 lie on the Cytoplasmic side of the membrane; that stretch reads RAKGLKHVVQCVIVAVKTIGN. Residues 922–941 traverse the membrane as a helical segment; it reads IVLVTCLLQFMFAVIGVQLF. Over 942–1030 the chain is Extracellular; that stretch reads KGKFFSCSDG…NGGPIYNFRP (89 aa). The segment at 979–1068 is dihydropyridine binding; the sequence is REWKNNKFHF…FQNEGEQEYK (90 aa). A Ca(2+)-binding site is contributed by Glu-1005. A helical transmembrane segment spans residues 1031–1055; the sequence is IVAAYYIIYIIIIAFFMVNIFVGFV. The Cytoplasmic segment spans residues 1056–1110; sequence IVTFQNEGEQEYKNCELDKNQRNCIEFALKAKPVRRYIPKHSIQYKVWWFVTSSS. The IV repeat unit spans residues 1096 to 1370; sequence HSIQYKVWWF…LFVAVIMDNF (275 aa). A helical transmembrane segment spans residues 1111–1129; the sequence is FEYSIFVLIMINTVTLAMK. At 1130-1143 the chain is on the extracellular side; that stretch reads FYKQPEYYSEILDA. A helical membrane pass occupies residues 1144–1163; that stretch reads LNMIFTAVFSLEFIFKLAAF. Residues 1164 to 1172 are Cytoplasmic-facing; sequence RFKNYFGDA. The helical transmembrane segment at 1173-1191 threads the bilayer; the sequence is WNTFDFIIVLGSFIDIVYS. The Extracellular portion of the chain corresponds to 1192–1219; sequence EIKTKEQALATCDGQSCNKAKGGSTLIS. The helical transmembrane segment at 1220 to 1238 threads the bilayer; it reads INFFRLFRVMRLVKLLSKG. The Cytoplasmic portion of the chain corresponds to 1239-1257; sequence EGIRTLLWTFIKSFQALPY. A helical transmembrane segment spans residues 1258–1277; sequence VALLIVMLFFIYAVIGMQVF. At 1278–1343 the chain is on the extracellular side; it reads GKIMLEEGTS…AVNNCGSSIA (66 aa). A dihydropyridine binding region spans residues 1327-1389; that stretch reads KCDPESDAVN…LGPHHLDEFI (63 aa). Residues 1337-1378 form a phenylalkylamine binding region; that stretch reads NCGSSIAFPYFISFYVLCSFLIINLFVAVIMDNFDYLTRDWS. A helical membrane pass occupies residues 1344–1362; that stretch reads FPYFISFYVLCSFLIINLF. Topologically, residues 1363–1687 are cytoplasmic; sequence VAVIMDNFDY…PKSKDKDEEF (325 aa).

Belongs to the calcium channel alpha-1 subunit (TC 1.A.1.11) family. Predominantly expressed in the larval body wall musculature. In adults, highest expression in thorax followed by head and at a lower extent by abdomen.

Its subcellular location is the membrane. Voltage-sensitive calcium channels (VSCC) mediate the entry of calcium ions into excitable cells and are also involved in a variety of calcium-dependent processes, including muscle contraction, hormone or neurotransmitter release, gene expression, cell motility, cell division and cell death. MDL-alpha1 encodes a dihydropyridine- and diltiazem-sensitive current in larval body wall muscle. The chain is Muscle calcium channel subunit alpha-1 from Musca domestica (House fly).